Reading from the N-terminus, the 282-residue chain is 4-diphosphocytidyl-2-C-methyl-D-erythritol kinase (282 aa).

Lysine 11 is a catalytic residue. 93–103 contacts ATP; the sequence is LVSAGLAGGSA. Aspartate 133 is a catalytic residue.

It belongs to the GHMP kinase family. IspE subfamily.

It catalyses the reaction 4-CDP-2-C-methyl-D-erythritol + ATP = 4-CDP-2-C-methyl-D-erythritol 2-phosphate + ADP + H(+). It participates in isoprenoid biosynthesis; isopentenyl diphosphate biosynthesis via DXP pathway; isopentenyl diphosphate from 1-deoxy-D-xylulose 5-phosphate: step 3/6. In terms of biological role, catalyzes the phosphorylation of the position 2 hydroxy group of 4-diphosphocytidyl-2C-methyl-D-erythritol. In Ehrlichia chaffeensis (strain ATCC CRL-10679 / Arkansas), this protein is 4-diphosphocytidyl-2-C-methyl-D-erythritol kinase.